The following is a 435-amino-acid chain: Protoheme IX farnesyltransferase, mitochondrial (435 aa).

Residues 1-35 constitute a mitochondrion transit peptide; sequence MPALCATYLIHSGNLRACLRIVPLTKPSVVIAYRH. 6 consecutive transmembrane segments (helical) span residues 135–155, 157–177, 212–232, 250–270, 324–344, and 401–421; these read VLVM…ATVL, LLSL…INMG, GVIG…LLGA, IINT…GWAA, VALR…YYGI, and FWVS…HKKG.

This sequence belongs to the UbiA prenyltransferase family.

The protein localises to the mitochondrion membrane. In terms of biological role, converts protoheme IX and farnesyl diphosphate to heme O. This is Protoheme IX farnesyltransferase, mitochondrial (COX10) from Eremothecium gossypii (strain ATCC 10895 / CBS 109.51 / FGSC 9923 / NRRL Y-1056) (Yeast).